Reading from the N-terminus, the 177-residue chain is Large ribosomal subunit protein uL6 (177 aa).

Belongs to the universal ribosomal protein uL6 family. As to quaternary structure, part of the 50S ribosomal subunit.

In terms of biological role, this protein binds to the 23S rRNA, and is important in its secondary structure. It is located near the subunit interface in the base of the L7/L12 stalk, and near the tRNA binding site of the peptidyltransferase center. This is Large ribosomal subunit protein uL6 from Albidiferax ferrireducens (strain ATCC BAA-621 / DSM 15236 / T118) (Rhodoferax ferrireducens).